The primary structure comprises 449 residues: Plasmepsin IV (449 aa).

The Cytoplasmic segment spans residues 1–37; it reads MALTVKEEEFSNTLIKNASAFDRLKLGNLKNLKIQKK. The propeptide occupies 1 to 121; the sequence is MALTVKEEEF…SGYAQKGYLG (121 aa). A helical; Signal-anchor for type II membrane protein membrane pass occupies residues 38–58; the sequence is LQFLYLILFVLITGVFFFFLI. Topologically, residues 59–449 are lumenal; it reads GNFYSHRKLY…SVGFAVAKNL (391 aa). Residues 137 to 444 form the Peptidase A1 domain; that stretch reads FYGEGQIGTN…DYEKESVGFA (308 aa). The active site involves aspartate 155. Cysteine 168 and cysteine 173 are disulfide-bonded. The active site involves aspartate 335. Residues cysteine 370 and cysteine 406 are joined by a disulfide bond.

The protein belongs to the peptidase A1 family. Component of the hemozoin formation complex (HFC) composed of falcipains FP2A and/or FP2B, plasmepsins PMII, PMIII/HAP and PMIV, heme detoxifying protein HDP and falcilysin FLN. The HFC complex is involved in hemoglobin degradation and detoxification of heme in the food vacuole during the asexual blood stage. Post-translationally, proteolytically cleaved into the soluble active mature form by cysteine proteases in the digestive vacuole of trophozoites. Proteolysis requires an acidic environment. Autoprocessing or transprocessing by other plasmepsins such as PMII may serve as an alternate activation system.

It localises to the membrane. Its subcellular location is the vacuole lumen. The enzyme catalyses Hydrolysis of the bonds linking certain hydrophobic residues in hemoglobin or globin. Also cleaves small molecules substrates such as Ala-Leu-Glu-Arg-Thr-Phe-|-Phe(NO2)-Ser-Phe-Pro-Thr.. Its activity is regulated as follows. Inhibited by pepstatin A. In terms of biological role, during the asexual blood stage, catalyzes the cleavage of denatured host hemoglobin (Hb) or globins. Digestion of host Hb is an essential step which provides the parasite with amino acids for protein synthesis, and regulates osmolarity. This is Plasmepsin IV from Plasmodium falciparum (isolate HB3).